Here is a 2922-residue protein sequence, read N- to C-terminus: Small ribosomal subunit protein uS4c (2922 aa).

The S4 RNA-binding domain maps to 111–174 (MRLDNIVFRL…ISMELVSRFL (64 aa)).

It belongs to the universal ribosomal protein uS4 family. Part of the 30S ribosomal subunit. Contacts protein S5. The interaction surface between S4 and S5 is involved in control of translational fidelity.

The protein resides in the plastid. Its subcellular location is the chloroplast. One of the primary rRNA binding proteins, it binds directly to 16S rRNA where it nucleates assembly of the body of the 30S subunit. Functionally, with S5 and S12 plays an important role in translational accuracy. The protein is Small ribosomal subunit protein uS4c (rps4) of Stigeoclonium helveticum (Green alga).